We begin with the raw amino-acid sequence, 248 residues long: Triosephosphate isomerase (248 aa).

Substrate-binding residues include Asn-10 and Lys-12. His-95 acts as the Electrophile in catalysis. Glu-165 functions as the Proton acceptor in the catalytic mechanism.

This sequence belongs to the triosephosphate isomerase family. Homodimer.

It carries out the reaction D-glyceraldehyde 3-phosphate = dihydroxyacetone phosphate. Its pathway is carbohydrate biosynthesis; gluconeogenesis. It functions in the pathway carbohydrate degradation; glycolysis; D-glyceraldehyde 3-phosphate from glycerone phosphate: step 1/1. This Eremothecium gossypii (strain ATCC 10895 / CBS 109.51 / FGSC 9923 / NRRL Y-1056) (Yeast) protein is Triosephosphate isomerase (TPI1).